We begin with the raw amino-acid sequence, 618 residues long: GMC oxidoreductase family protein Mala s 12 (618 aa).

An N-terminal signal peptide occupies residues 1 to 23 (MKGIVSWAVVSAALVLSATESLA). 2 residues coordinate FAD: Val129 and Val280. The active-site Proton donor is the His556. His599 (proton acceptor) is an active-site residue.

Belongs to the GMC oxidoreductase family. As to quaternary structure, monomer. FAD is required as a cofactor.

The protein localises to the secreted. This chain is GMC oxidoreductase family protein Mala s 12, found in Malassezia sympodialis (strain ATCC 42132) (Atopic eczema-associated yeast).